The following is a 593-amino-acid chain: Aspartate--tRNA ligase (593 aa).

L-aspartate is bound at residue E180. The segment at 204-207 (QLFK) is aspartate. R226 contacts L-aspartate. ATP contacts are provided by residues 226-228 (RDE) and Q235. H454 contributes to the L-aspartate binding site. Residue E488 coordinates ATP. R495 serves as a coordination point for L-aspartate. 540 to 543 (GFDR) provides a ligand contact to ATP.

The protein belongs to the class-II aminoacyl-tRNA synthetase family. Type 1 subfamily. In terms of assembly, homodimer.

The protein localises to the cytoplasm. It carries out the reaction tRNA(Asp) + L-aspartate + ATP = L-aspartyl-tRNA(Asp) + AMP + diphosphate. Catalyzes the attachment of L-aspartate to tRNA(Asp) in a two-step reaction: L-aspartate is first activated by ATP to form Asp-AMP and then transferred to the acceptor end of tRNA(Asp). In Clostridium novyi (strain NT), this protein is Aspartate--tRNA ligase.